The chain runs to 146 residues: Hemoglobin subunit beta (146 aa).

Valine 1 bears the N-acetylvaline mark. One can recognise a Globin domain in the interval 2-146 (HMTDAEKKLV…VANALAHKYH (145 aa)). A Phosphothreonine modification is found at threonine 12. Position 59 is an N6-acetyllysine (lysine 59). Heme b is bound at residue histidine 63. Lysine 82 carries the post-translational modification N6-acetyllysine. A heme b-binding site is contributed by histidine 92. Cysteine 93 carries the S-nitrosocysteine modification. An N6-acetyllysine modification is found at lysine 144.

The protein belongs to the globin family. Tetramer of two alpha and two different beta chains. Two external cysteine residues at beta-16 and beta-52 cause reversible polymerization to octamers and most likely irreversible formation of higher polymers. As to expression, red blood cells.

Functionally, involved in oxygen transport from the lung to the various peripheral tissues. In Echinops telfairi (Lesser hedgehog tenrec), this protein is Hemoglobin subunit beta (HBB).